The sequence spans 184 residues: Protein Syd (184 aa).

It belongs to the Syd family.

It is found in the cell inner membrane. Its function is as follows. Interacts with the SecY protein in vivo. May bind preferentially to an uncomplexed state of SecY, thus functioning either as a chelating agent for excess SecY in the cell or as a regulatory factor that negatively controls the translocase function. This Photorhabdus laumondii subsp. laumondii (strain DSM 15139 / CIP 105565 / TT01) (Photorhabdus luminescens subsp. laumondii) protein is Protein Syd.